Here is a 398-residue protein sequence, read N- to C-terminus: Acetate kinase (398 aa).

Asn-7 provides a ligand contact to Mg(2+). Lys-14 is a binding site for ATP. Arg-91 is a binding site for substrate. Asp-148 acts as the Proton donor/acceptor in catalysis. ATP is bound by residues 208–212 (HIGNG), 283–285 (DMR), and 331–335 (GVGEN). A Mg(2+)-binding site is contributed by Glu-385.

The protein belongs to the acetokinase family. In terms of assembly, homodimer. The cofactor is Mg(2+). Requires Mn(2+) as cofactor.

Its subcellular location is the cytoplasm. The enzyme catalyses acetate + ATP = acetyl phosphate + ADP. It participates in metabolic intermediate biosynthesis; acetyl-CoA biosynthesis; acetyl-CoA from acetate: step 1/2. Functionally, catalyzes the formation of acetyl phosphate from acetate and ATP. Can also catalyze the reverse reaction. This Porphyromonas gingivalis (strain ATCC BAA-308 / W83) protein is Acetate kinase.